A 589-amino-acid polypeptide reads, in one-letter code: C-type lectin domain family 4 member F (589 aa).

The Cytoplasmic segment spans residues 1–39 (MDGEAVRFCTDNQCVSLHPQEVDSVAMAPAAPKIPRLVQ). The helical; Signal-anchor for type II membrane protein transmembrane segment at 40 to 60 (ATPAFMAVTLVFSLVTLFVVV) threads the bilayer. Over 61–589 (QQQTRPVPKP…TPPCPWILSN (529 aa)) the chain is Extracellular. Asn79, Asn113, Asn207, Asn230, Asn244, Asn312, Asn385, and Asn399 each carry an N-linked (GlcNAc...) asparagine glycan. A C-type lectin domain is found at 476-589 (NGGSLYYFSS…TPPCPWILSN (114 aa)).

The protein resides in the membrane. In terms of biological role, receptor with an affinity for galactose and fucose. Could be involved in endocytosis. This Homo sapiens (Human) protein is C-type lectin domain family 4 member F (CLEC4F).